Reading from the N-terminus, the 382-residue chain is Low-specificity L-threonine aldolase (382 aa).

Residue Lys-214 is modified to N6-(pyridoxal phosphate)lysine.

It belongs to the threonine aldolase family. Homotetramer. It depends on pyridoxal 5'-phosphate as a cofactor.

The enzyme catalyses L-threonine = acetaldehyde + glycine. The catalysed reaction is L-allo-threonine = acetaldehyde + glycine. It participates in amino-acid degradation; L-threonine degradation via aldolase pathway; acetaldehyde and glycine from L-threonine: step 1/1. This chain is Low-specificity L-threonine aldolase (GLY1), found in Eremothecium gossypii (strain ATCC 10895 / CBS 109.51 / FGSC 9923 / NRRL Y-1056) (Yeast).